The chain runs to 278 residues: Protein lyl-1 (278 aa).

The tract at residues 1-46 is disordered; that stretch reads MCPPQARAEVGSAMTEKTEMVCASSPAPAPPSKPASPGPLSTEEVD. The span at 27-37 shows a compositional bias: pro residues; sequence APAPPSKPASP. The region spanning 149 to 201 is the bHLH domain; sequence ARRVFTNSRERWRQQHVNGAFAELRKLLPTHPPDRKLSKNEVLRLAMKYIGFL. A disordered region spans residues 212–278; it reads LTSGPSAPGS…EQTSLSPEVR (67 aa). The span at 269–278 shows a compositional bias: polar residues; sequence EQTSLSPEVR. The residue at position 274 (Ser274) is a Phosphoserine.

As to quaternary structure, efficient DNA binding requires dimerization with another bHLH protein.

It is found in the nucleus. The polypeptide is Protein lyl-1 (Lyl1) (Mus musculus (Mouse)).